Reading from the N-terminus, the 331-residue chain is Phosphate acyltransferase (331 aa).

This sequence belongs to the PlsX family. Homodimer. Probably interacts with PlsY.

It localises to the cytoplasm. The catalysed reaction is a fatty acyl-[ACP] + phosphate = an acyl phosphate + holo-[ACP]. It participates in lipid metabolism; phospholipid metabolism. Functionally, catalyzes the reversible formation of acyl-phosphate (acyl-PO(4)) from acyl-[acyl-carrier-protein] (acyl-ACP). This enzyme utilizes acyl-ACP as fatty acyl donor, but not acyl-CoA. This Lactococcus lactis subsp. cremoris (strain SK11) protein is Phosphate acyltransferase.